A 234-amino-acid polypeptide reads, in one-letter code: Orotidine 5'-phosphate decarboxylase (234 aa).

Residues Asp10, Lys31, 58–67 (DLKLHDIPNT), Thr121, Arg183, Gln192, Gly212, and Arg213 contribute to the substrate site. Lys60 serves as the catalytic Proton donor.

Belongs to the OMP decarboxylase family. Type 1 subfamily. In terms of assembly, homodimer.

The catalysed reaction is orotidine 5'-phosphate + H(+) = UMP + CO2. It functions in the pathway pyrimidine metabolism; UMP biosynthesis via de novo pathway; UMP from orotate: step 2/2. In terms of biological role, catalyzes the decarboxylation of orotidine 5'-monophosphate (OMP) to uridine 5'-monophosphate (UMP). In Halalkalibacterium halodurans (strain ATCC BAA-125 / DSM 18197 / FERM 7344 / JCM 9153 / C-125) (Bacillus halodurans), this protein is Orotidine 5'-phosphate decarboxylase.